Reading from the N-terminus, the 387-residue chain is Deoxyguanosinetriphosphate triphosphohydrolase-like protein (387 aa).

Positions 1–26 are disordered; sequence MTAPYASDPQRARGRRVKEEESTFRS. Basic and acidic residues predominate over residues 17 to 26; that stretch reads VKEEESTFRS. The region spanning 62–198 is the HD domain; sequence RLTHSIEVAQ…AAIADDVAYN (137 aa).

This sequence belongs to the dGTPase family. Type 2 subfamily.

The protein is Deoxyguanosinetriphosphate triphosphohydrolase-like protein of Roseobacter denitrificans (strain ATCC 33942 / OCh 114) (Erythrobacter sp. (strain OCh 114)).